The sequence spans 215 residues: Guanylate kinase (215 aa).

The Guanylate kinase-like domain occupies 6 to 185 (GAILVLSGPS…SEKLLLSIAR (180 aa)). 13–20 (GPSGSGKS) contacts ATP.

Belongs to the guanylate kinase family.

The protein resides in the cytoplasm. It carries out the reaction GMP + ATP = GDP + ADP. Functionally, essential for recycling GMP and indirectly, cGMP. The sequence is that of Guanylate kinase from Wolinella succinogenes (strain ATCC 29543 / DSM 1740 / CCUG 13145 / JCM 31913 / LMG 7466 / NCTC 11488 / FDC 602W) (Vibrio succinogenes).